We begin with the raw amino-acid sequence, 505 residues long: Lysine--tRNA ligase (505 aa).

Glu415 and Glu422 together coordinate Mg(2+).

This sequence belongs to the class-II aminoacyl-tRNA synthetase family. In terms of assembly, homodimer. The cofactor is Mg(2+).

Its subcellular location is the cytoplasm. The enzyme catalyses tRNA(Lys) + L-lysine + ATP = L-lysyl-tRNA(Lys) + AMP + diphosphate. The chain is Lysine--tRNA ligase from Pectobacterium carotovorum subsp. carotovorum (strain PC1).